We begin with the raw amino-acid sequence, 577 residues long: Myb-like protein N (577 aa).

Disordered regions lie at residues 1-23 (MMTI…NIYT), 206-225 (TPFS…SPLN), and 240-264 (SSSS…LSSS). The segment covering 213–225 (PNSPNSTSSSPLN) has biased composition (low complexity). 2 consecutive HTH myb-type domains span residues 403–465 (KKST…CPAI) and 466–517 (RKGS…SREV). 2 DNA-binding regions (H-T-H motif) span residues 437-461 (WKKI…KRVL) and 489-513 (WKNV…KSCM). Positions 518 to 570 (PWTPKEDEILQKKVIENKQDSTKEIGWMDLSKAMARARQTKIPRTALECKIRF) constitute a Myb-like domain.

The protein resides in the nucleus. This chain is Myb-like protein N (mybN), found in Dictyostelium discoideum (Social amoeba).